Consider the following 318-residue polypeptide: Protein-L-histidine N-pros-methyltransferase (318 aa).

The N-terminal stretch at 1-18 (MRLLAGWLCLSLASVWLA) is a signal peptide. An N-linked (GlcNAc...) asparagine glycan is attached at Asn35. Residues Glu174, Asn210, and Tyr295 each contribute to the S-adenosyl-L-homocysteine site.

This sequence belongs to the METTL9 family.

It is found in the endoplasmic reticulum. It localises to the mitochondrion. The enzyme catalyses L-histidyl-[protein] + S-adenosyl-L-methionine = N(pros)-methyl-L-histidyl-[protein] + S-adenosyl-L-homocysteine + H(+). In terms of biological role, protein-histidine N-methyltransferase that specifically catalyzes 1-methylhistidine (pros-methylhistidine) methylation of target proteins. Specifically methylates the second His of proteins with a His-x-His (HxH) motif (where 'x' is preferably a small amino acid), while exploiting the first one as a recognition signature. Catalyzes methylation of target proteins such as S100A9, NDUFB3, SLC39A5, SLC39A7, ARMC6 and DNAJB12; 1-methylhistidine modification may affect the binding of zinc and other metals to its target proteins. Constitutes the main methyltransferase for the 1-methylhistidine modification in cell. The polypeptide is Protein-L-histidine N-pros-methyltransferase (Homo sapiens (Human)).